The chain runs to 558 residues: Undecaprenyl phosphate-alpha-4-amino-4-deoxy-L-arabinose arabinosyl transferase 1 (558 aa).

Transmembrane regions (helical) follow at residues 4–24, 87–107, 115–135, 136–156, 178–198, 207–227, 257–277, 295–315, 316–336, 355–375, 383–403, and 411–431; these read GAGL…LVPL, FASV…SWTV, LLAA…TYSV, LDPM…FALR, FMTK…PVAL, LGYG…WALA, APFW…LGLL, FLLL…KGKL, LTYI…YGRE, AFAL…LPWA, WPRI…AAVS, and WALA…IIPQ.

Belongs to the glycosyltransferase 83 family.

The protein resides in the cell inner membrane. It catalyses the reaction 4-amino-4-deoxy-alpha-L-arabinopyranosyl di-trans,octa-cis-undecaprenyl phosphate + lipid IVA = lipid IIA + di-trans,octa-cis-undecaprenyl phosphate.. Its pathway is lipopolysaccharide metabolism; 4-amino-4-deoxy-beta-L-arabinose-lipid A biosynthesis. Functionally, catalyzes the transfer of the L-Ara4N moiety of the glycolipid undecaprenyl phosphate-alpha-L-Ara4N to lipid A. The modified arabinose is attached to lipid A and is required for resistance to polymyxin and cationic antimicrobial peptides. The protein is Undecaprenyl phosphate-alpha-4-amino-4-deoxy-L-arabinose arabinosyl transferase 1 of Sodalis glossinidius (strain morsitans).